The sequence spans 1040 residues: Contactin-2 (1040 aa).

Positions 1 to 30 (MGTHARKKASLLLLVLATVALVSSPGWSFA) are cleaved as a signal peptide. Ig-like C2-type domains follow at residues 39–130 (PIFE…AVLR), 135–224 (QEFS…SVFS), 241–324 (PSIK…GRII), 329–413 (PEWL…AELA), 419–506 (PDFR…GILS), and 511–605 (TKIT…ATVL). 4 disulfide bridges follow: Cys63-Cys113, Cys157-Cys209, Cys263-Cys308, and Cys350-Cys397. N-linked (GlcNAc...) asparagine glycans are attached at residues Asn78, Asn200, and Asn206. 4 N-linked (GlcNAc...) asparagine glycosylation sites follow: Asn463, Asn479, Asn500, and Asn527. 4 consecutive Fibronectin type-III domains span residues 612 to 710 (PPGG…TKEA), 715 to 812 (APSG…SAEE), 817 to 913 (APAK…VKPP), and 917 to 1008 (PPGN…NGGT). A glycan (N-linked (GlcNAc...) asparagine) is linked at Asn777. Residues 796–798 (RGD) carry the Cell attachment site motif. N-linked (GlcNAc...) asparagine glycosylation is found at Asn832, Asn920, and Asn942. The interval 895–921 (RAGTGPASPSADAMTVKPPPRRPPGNI) is disordered. The GPI-anchor amidated alanine moiety is linked to residue Ala1015. The propeptide at 1016–1040 (AARPAHPGPAFSCMVILMLAGYQKL) is removed in mature form.

Belongs to the immunoglobulin superfamily. Contactin family. In neural tissues in embryos, and in adult brain, spinal cord and cerebellum.

It localises to the cell membrane. In terms of biological role, may play a role in the initial growth and guidance of axons. May be involved in cell adhesion. In conjunction with another transmembrane protein, CNTNAP2, contributes to the organization of axonal domains at nodes of Ranvier by maintaining voltage-gated potassium channels at the juxtaparanodal region. This Rattus norvegicus (Rat) protein is Contactin-2 (Cntn2).